Reading from the N-terminus, the 448-residue chain is D-inositol 3-phosphate glycosyltransferase (448 aa).

A disordered region spans residues Met1–Arg21. A 1D-myo-inositol 3-phosphate-binding site is contributed by His29. UDP-N-acetyl-alpha-D-glucosamine-binding positions include Gln35 to Pro36 and Gly43. 1D-myo-inositol 3-phosphate-binding positions include Asp40–Asn45, Lys98, Tyr131, Thr155, and Arg175. UDP-N-acetyl-alpha-D-glucosamine contacts are provided by Arg255, Lys260, and Gln321. Residues Tyr330, Arg331, and Ala333 each contribute to the Mg(2+) site. Residues Glu343 and Glu351 each contribute to the UDP-N-acetyl-alpha-D-glucosamine site. Thr357 contacts Mg(2+).

The protein belongs to the glycosyltransferase group 1 family. MshA subfamily. As to quaternary structure, homodimer.

It catalyses the reaction 1D-myo-inositol 3-phosphate + UDP-N-acetyl-alpha-D-glucosamine = 1D-myo-inositol 2-acetamido-2-deoxy-alpha-D-glucopyranoside 3-phosphate + UDP + H(+). Its function is as follows. Catalyzes the transfer of a N-acetyl-glucosamine moiety to 1D-myo-inositol 3-phosphate to produce 1D-myo-inositol 2-acetamido-2-deoxy-glucopyranoside 3-phosphate in the mycothiol biosynthesis pathway. The polypeptide is D-inositol 3-phosphate glycosyltransferase (Salinispora arenicola (strain CNS-205)).